A 493-amino-acid polypeptide reads, in one-letter code: MNEIIRSDAATLAARIAAKELSSVEVTQACLDQIAATDERYHAFLHVAADEALGAAAVVDEAVAAGERLPSPLAGVPLALKDVFTTVDMPTTCGSKILQGWRSPYDATVTTKLRAAGIPILGKTNMDEFAMGSSTENSAYGPTRNPWNVERVPGGSGGGSAAALAAFQAPLAIGSDTGGSIRQPAALTATVGVKPTYGTVSRYGLVACASSLDQGGPCARTVLDTALLHQVIAGHDIRDSTSVDAPVPDVVGAARAGTAGDLKGVRVGVVKQLRGEGYQPGVLASFEAAVEQLTALGAEVSEVDCPHFEYALAAYYLILPSEVSSNLARFDAMRYGLRIGDDGSHSAEEVMALTRAAGFGPEVKRRIMIGTYALSAGYYDAYYNQAQKVRTLIARDLDAAYESVDVVVSPATPTTAFGLGEKVDDPLAMYLFDLCTLPLNLAGNCGMSVPSGLSPDDDLPVGLQIMAPALADDRLYRVGAAYEAARGPLRSAI.

Catalysis depends on charge relay system residues K81 and S156. Catalysis depends on S180, which acts as the Acyl-ester intermediate.

Belongs to the amidase family. GatA subfamily. As to quaternary structure, heterotrimer of A, B and C subunits.

It catalyses the reaction L-glutamyl-tRNA(Gln) + L-glutamine + ATP + H2O = L-glutaminyl-tRNA(Gln) + L-glutamate + ADP + phosphate + H(+). Functionally, allows the formation of correctly charged Gln-tRNA(Gln) through the transamidation of misacylated Glu-tRNA(Gln) in organisms which lack glutaminyl-tRNA synthetase. The reaction takes place in the presence of glutamine and ATP through an activated gamma-phospho-Glu-tRNA(Gln). The protein is Glutamyl-tRNA(Gln) amidotransferase subunit A of Mycolicibacterium paratuberculosis (strain ATCC BAA-968 / K-10) (Mycobacterium paratuberculosis).